The sequence spans 498 residues: Hexokinase-1 (498 aa).

Residues Ala-4–Val-24 traverse the membrane as a helical segment. One can recognise a Hexokinase domain in the interval Gly-35 to Ala-487. Residues Thr-90 to Val-228 are hexokinase small subdomain. ADP contacts are provided by Gly-104, Thr-105, and Asn-106. D-glucose contacts are provided by Thr-194, Lys-195, Asn-229, and Asp-230. Residues Asn-229 to Asp-476 are hexokinase large subdomain. Residue Thr-253 participates in ADP binding. Positions 256, 284, and 315 each coordinate D-glucose. Position 441 (Gly-441) interacts with ADP.

It belongs to the hexokinase family.

It is found in the plastid. The protein resides in the chloroplast outer membrane. It catalyses the reaction a D-hexose + ATP = a D-hexose 6-phosphate + ADP + H(+). It carries out the reaction D-fructose + ATP = D-fructose 6-phosphate + ADP + H(+). The enzyme catalyses D-glucose + ATP = D-glucose 6-phosphate + ADP + H(+). It participates in carbohydrate metabolism; hexose metabolism. It functions in the pathway carbohydrate degradation; glycolysis; D-glyceraldehyde 3-phosphate and glycerone phosphate from D-glucose: step 1/4. Its function is as follows. Fructose and glucose phosphorylating enzyme. This Spinacia oleracea (Spinach) protein is Hexokinase-1 (HXK1).